The following is a 423-amino-acid chain: Riboflavin biosynthesis protein RibBA (423 aa).

The tract at residues 1–204 (MTRLDSVERA…IADLIEWRRK (204 aa)) is DHBP synthase. D-ribulose 5-phosphate is bound by residues 28–29 (RE), Asp-33, 141–145 (RPGHT), and Glu-165. Residue Glu-29 participates in Mg(2+) binding. His-144 serves as a coordination point for Mg(2+). The GTP cyclohydrolase II stretch occupies residues 205-423 (HEKHIARVAE…AVPGEFGGAV (219 aa)). Residue 259-263 (RVHSE) participates in GTP binding. Zn(2+) contacts are provided by Cys-264, Cys-275, and Cys-277. GTP contacts are provided by residues Gln-280, 303–305 (EGR), and Thr-325. The active-site Proton acceptor; for GTP cyclohydrolase activity is Asp-337. Arg-339 functions as the Nucleophile; for GTP cyclohydrolase activity in the catalytic mechanism. Residues Thr-360 and Lys-365 each coordinate GTP.

The protein in the N-terminal section; belongs to the DHBP synthase family. It in the C-terminal section; belongs to the GTP cyclohydrolase II family. Requires Mg(2+) as cofactor. The cofactor is Mn(2+). Zn(2+) serves as cofactor.

It catalyses the reaction D-ribulose 5-phosphate = (2S)-2-hydroxy-3-oxobutyl phosphate + formate + H(+). The enzyme catalyses GTP + 4 H2O = 2,5-diamino-6-hydroxy-4-(5-phosphoribosylamino)-pyrimidine + formate + 2 phosphate + 3 H(+). It participates in cofactor biosynthesis; riboflavin biosynthesis; 2-hydroxy-3-oxobutyl phosphate from D-ribulose 5-phosphate: step 1/1. The protein operates within cofactor biosynthesis; riboflavin biosynthesis; 5-amino-6-(D-ribitylamino)uracil from GTP: step 1/4. Functionally, catalyzes the conversion of D-ribulose 5-phosphate to formate and 3,4-dihydroxy-2-butanone 4-phosphate. In terms of biological role, catalyzes the conversion of GTP to 2,5-diamino-6-ribosylamino-4(3H)-pyrimidinone 5'-phosphate (DARP), formate and pyrophosphate. The chain is Riboflavin biosynthesis protein RibBA from Mycolicibacterium gilvum (strain PYR-GCK) (Mycobacterium gilvum (strain PYR-GCK)).